A 161-amino-acid polypeptide reads, in one-letter code: 18.3 kDa class I heat shock protein (161 aa).

In terms of domain architecture, sHSP spans glutamate 48–tyrosine 161.

The protein belongs to the small heat shock protein (HSP20) family. Forms oligomeric structures.

It is found in the cytoplasm. This Oxybasis rubra (Red goosefoot) protein is 18.3 kDa class I heat shock protein (HSP18).